The following is a 314-amino-acid chain: Malate dehydrogenase (314 aa).

Residues 12–17 and D36 each bind NAD(+); that span reads GSGFTG. Residues R87 and R93 each contribute to the substrate site. NAD(+) contacts are provided by residues N100 and 123–125; that span reads LTN. A substrate-binding site is contributed by N125. S149 is subject to Phosphoserine. R156 provides a ligand contact to substrate. H180 serves as the catalytic Proton acceptor.

The protein belongs to the LDH/MDH superfamily. MDH type 3 family.

It catalyses the reaction (S)-malate + NAD(+) = oxaloacetate + NADH + H(+). Its function is as follows. Catalyzes the reversible oxidation of malate to oxaloacetate. The protein is Malate dehydrogenase of Shouchella clausii (strain KSM-K16) (Alkalihalobacillus clausii).